Consider the following 249-residue polypeptide: Hydroxyacylglutathione hydrolase (249 aa).

The Zn(2+) site is built by His53, His55, Asp57, His58, His110, Asp127, and His165.

Belongs to the metallo-beta-lactamase superfamily. Glyoxalase II family. As to quaternary structure, monomer. Zn(2+) serves as cofactor.

It catalyses the reaction an S-(2-hydroxyacyl)glutathione + H2O = a 2-hydroxy carboxylate + glutathione + H(+). The protein operates within secondary metabolite metabolism; methylglyoxal degradation; (R)-lactate from methylglyoxal: step 2/2. Its function is as follows. Thiolesterase that catalyzes the hydrolysis of S-D-lactoyl-glutathione to form glutathione and D-lactic acid. The sequence is that of Hydroxyacylglutathione hydrolase from Hamiltonella defensa subsp. Acyrthosiphon pisum (strain 5AT).